The chain runs to 249 residues: ATP synthase subunit a (249 aa).

5 helical membrane-spanning segments follow: residues 33–53 (GQVI…SIAA), 92–112 (LPFI…GALI), 131–151 (INTT…AGIS), 196–216 (LVVA…LMAL), and 217–237 (GLFT…AYIH).

It belongs to the ATPase A chain family. F-type ATPases have 2 components, CF(1) - the catalytic core - and CF(0) - the membrane proton channel. CF(1) has five subunits: alpha(3), beta(3), gamma(1), delta(1), epsilon(1). CF(0) has four main subunits: a, b, b' and c.

It is found in the cellular thylakoid membrane. Its function is as follows. Key component of the proton channel; it plays a direct role in the translocation of protons across the membrane. The sequence is that of ATP synthase subunit a from Microcystis aeruginosa (strain NIES-843 / IAM M-2473).